Consider the following 935-residue polypeptide: Coiled-coil domain-containing protein 66 (935 aa).

A compositionally biased stretch (polar residues) spans 76 to 96 (LDTSQAKPENSRLTFSPSTDK). The interval 76–103 (LDTSQAKPENSRLTFSPSTDKQYSEKDS) is disordered. Residue T114 is modified to Phosphothreonine. A Phosphoserine modification is found at S366. Residues 462 to 555 (LEHQKAIMAQ…EQRIRELAQK (94 aa)) adopt a coiled-coil conformation. 3 disordered regions span residues 470–491 (AQVE…KEEQ), 577–602 (TISS…DTGV), and 738–794 (ENLS…RTQQ). Basic and acidic residues predominate over residues 473 to 491 (EENRRKKRLEEEQRKKEEQ). The tract at residues 567-935 (GAQVDYKAFT…NQEDNFSSSF (369 aa)) is mediates localization to cilia, centrosomes and spindle microtubules and the interaction with PCM1, CEP290, CEP104 and CSPP1. Positions 590-602 (DTSTASPKKDTGV) are enriched in polar residues. Position 595 is a phosphoserine (S595). Over residues 752–782 (SHRETESESRLHLIKKVEEPLKTPSVSKERF) the composition is skewed to basic and acidic residues. The span at 783 to 794 (QTSPAVKNRTQQ) shows a compositional bias: polar residues.

Homodimer; disulfide-linked. Interacts with CEP290. Interacts with PCM1. Interacts with ARMC9, TOGARAM1, CSPP1 and CEP104. Interacts with CDK5RAP2, CEP152, CEP192, TBG1 and PRC1. As to expression, widely expressed. Expressed in retina by rod photoreceptors but also detected in outer plexiform and ganglion cell layers (at protein level).

The protein resides in the cytoplasm. It localises to the cytoskeleton. The protein localises to the microtubule organizing center. It is found in the centrosome. Its subcellular location is the centriolar satellite. The protein resides in the cell projection. It localises to the cilium. The protein localises to the cilium basal body. It is found in the cilium axoneme. Its subcellular location is the photoreceptor inner segment. The protein resides in the photoreceptor outer segment. Microtubule-binding protein required for ciliogenesis. May function in ciliogenesis by mediating the transport of proteins like BBS4 to the cilium, but also through the organization of the centriolar satellites. Required for the assembly of signaling-competent cilia with proper structure and length. Mediates this function in part by regulating transition zone assembly and basal body recruitment of the IFT-B complex. Cooperates with the ciliopathy proteins CSPP1 and CEP104 during cilium length regulation. Plays two important roles during cell division. First, is required for mitotic progression via regulation of spindle assembly, organization and orientation, levels of spindle microtubules (MTs), kinetochore-fiber integrity, and chromosome alignment. Second, functions during cytokinesis in part by regulating assembly and organization of central spindle and midbody MTs. Plays a role in retina morphogenesis and/or homeostasis. This Mus musculus (Mouse) protein is Coiled-coil domain-containing protein 66.